We begin with the raw amino-acid sequence, 229 residues long: Type III pantothenate kinase (229 aa).

6-13 (NIGNSRQH) serves as a coordination point for ATP. Substrate-binding positions include Tyr-77 and 81–84 (GIDR). Asp-83 (proton acceptor) is an active-site residue. A K(+)-binding site is contributed by Asp-103. Thr-106 provides a ligand contact to ATP. Thr-159 is a binding site for substrate.

The protein belongs to the type III pantothenate kinase family. In terms of assembly, homodimer. NH4(+) is required as a cofactor. The cofactor is K(+).

The protein localises to the cytoplasm. The catalysed reaction is (R)-pantothenate + ATP = (R)-4'-phosphopantothenate + ADP + H(+). It participates in cofactor biosynthesis; coenzyme A biosynthesis; CoA from (R)-pantothenate: step 1/5. Its function is as follows. Catalyzes the phosphorylation of pantothenate (Pan), the first step in CoA biosynthesis. The chain is Type III pantothenate kinase from Gloeobacter violaceus (strain ATCC 29082 / PCC 7421).